The following is a 59-amino-acid chain: Chromatin protein Cren7 (59 aa).

The protein belongs to the Cren7 family. In terms of assembly, monomer. In terms of processing, methylated at multiple sites, to varying extents.

It is found in the chromosome. Its subcellular location is the cytoplasm. A chromatin protein, binds double-stranded DNA without sequence specificity. Constrains negative DNA supercoils. The sequence is that of Chromatin protein Cren7 from Pyrobaculum aerophilum (strain ATCC 51768 / DSM 7523 / JCM 9630 / CIP 104966 / NBRC 100827 / IM2).